A 242-amino-acid chain; its full sequence is 1-(5-phosphoribosyl)-5-[(5-phosphoribosylamino)methylideneamino] imidazole-4-carboxamide isomerase (242 aa).

Asp-8 serves as the catalytic Proton acceptor. The Proton donor role is filled by Asp-129.

The protein belongs to the HisA/HisF family.

The protein localises to the cytoplasm. The catalysed reaction is 1-(5-phospho-beta-D-ribosyl)-5-[(5-phospho-beta-D-ribosylamino)methylideneamino]imidazole-4-carboxamide = 5-[(5-phospho-1-deoxy-D-ribulos-1-ylimino)methylamino]-1-(5-phospho-beta-D-ribosyl)imidazole-4-carboxamide. The protein operates within amino-acid biosynthesis; L-histidine biosynthesis; L-histidine from 5-phospho-alpha-D-ribose 1-diphosphate: step 4/9. In Clostridium botulinum (strain Langeland / NCTC 10281 / Type F), this protein is 1-(5-phosphoribosyl)-5-[(5-phosphoribosylamino)methylideneamino] imidazole-4-carboxamide isomerase.